The sequence spans 379 residues: Type II methyltransferase M.CvrRI (379 aa).

The protein belongs to the N(4)/N(6)-methyltransferase family.

It catalyses the reaction a 2'-deoxyadenosine in DNA + S-adenosyl-L-methionine = an N(6)-methyl-2'-deoxyadenosine in DNA + S-adenosyl-L-homocysteine + H(+). Functionally, a gamma subtype methylase, recognizes the double-stranded sequence 5'-TGCA-3', methylates A-4 on both strands, and protects the DNA from cleavage by the CviRI endonuclease. In Chlorella (PBCV-XZ-6E), this protein is Type II methyltransferase M.CvrRI (CVIRIM).